The sequence spans 66 residues: Large ribosomal subunit protein uL29 (66 aa).

Belongs to the universal ribosomal protein uL29 family.

In Helicobacter pylori (strain Shi470), this protein is Large ribosomal subunit protein uL29.